We begin with the raw amino-acid sequence, 370 residues long: Quinolinate synthase (370 aa).

Iminosuccinate contacts are provided by H62 and S83. C128 is a [4Fe-4S] cluster binding site. Iminosuccinate contacts are provided by residues 154–156 and S171; that span reads YAN. [4Fe-4S] cluster is bound at residue C215. Iminosuccinate is bound by residues 241 to 243 and T258; that span reads HPE. C312 contributes to the [4Fe-4S] cluster binding site.

Belongs to the quinolinate synthase family. Type 1 subfamily. The cofactor is [4Fe-4S] cluster.

Its subcellular location is the cytoplasm. The enzyme catalyses iminosuccinate + dihydroxyacetone phosphate = quinolinate + phosphate + 2 H2O + H(+). The protein operates within cofactor biosynthesis; NAD(+) biosynthesis; quinolinate from iminoaspartate: step 1/1. Functionally, catalyzes the condensation of iminoaspartate with dihydroxyacetone phosphate to form quinolinate. This is Quinolinate synthase from Neisseria meningitidis serogroup A / serotype 4A (strain DSM 15465 / Z2491).